A 161-amino-acid chain; its full sequence is ATP synthase subunit b 2 (161 aa).

The chain crosses the membrane as a helical span at residues 13 to 33; the sequence is IVWLVIALVAMYFVMSRLAIP.

This sequence belongs to the ATPase B chain family. In terms of assembly, F-type ATPases have 2 components, F(1) - the catalytic core - and F(0) - the membrane proton channel. F(1) has five subunits: alpha(3), beta(3), gamma(1), delta(1), epsilon(1). F(0) has three main subunits: a(1), b(2) and c(10-14). The alpha and beta chains form an alternating ring which encloses part of the gamma chain. F(1) is attached to F(0) by a central stalk formed by the gamma and epsilon chains, while a peripheral stalk is formed by the delta and b chains.

It is found in the cell inner membrane. Functionally, f(1)F(0) ATP synthase produces ATP from ADP in the presence of a proton or sodium gradient. F-type ATPases consist of two structural domains, F(1) containing the extramembraneous catalytic core and F(0) containing the membrane proton channel, linked together by a central stalk and a peripheral stalk. During catalysis, ATP synthesis in the catalytic domain of F(1) is coupled via a rotary mechanism of the central stalk subunits to proton translocation. Component of the F(0) channel, it forms part of the peripheral stalk, linking F(1) to F(0). The b'-subunit is a diverged and duplicated form of b found in plants and photosynthetic bacteria. This is ATP synthase subunit b 2 (atpF2) from Rhodospirillum rubrum (strain ATCC 11170 / ATH 1.1.1 / DSM 467 / LMG 4362 / NCIMB 8255 / S1).